Consider the following 617-residue polypeptide: tRNA-dihydrouridine(47) synthase [NAD(P)(+)] (617 aa).

Residues 42–70 form a C3H1-type zinc finger; the sequence is KENNALCPAISIGNECPYKENCKFPHDVE. The interval 160 to 193 is disordered; the sequence is EEKPDPSSKVSNIPEENRDATSAISEGKETESVS. FMN-binding positions include 245–247 and Gln308; that span reads PLT. Catalysis depends on Cys340, which acts as the Proton donor. Residues Lys380, His411, 460–462, and 483–484 contribute to the FMN site; these read NGD and AR.

Belongs to the Dus family. Dus3 subfamily. Requires FMN as cofactor.

The protein resides in the cytoplasm. Its subcellular location is the nucleus. The enzyme catalyses 5,6-dihydrouridine(47) in tRNA + NAD(+) = uridine(47) in tRNA + NADH + H(+). The catalysed reaction is 5,6-dihydrouridine(47) in tRNA + NADP(+) = uridine(47) in tRNA + NADPH + H(+). It carries out the reaction a 5,6-dihydrouridine in mRNA + NAD(+) = a uridine in mRNA + NADH + H(+). It catalyses the reaction a 5,6-dihydrouridine in mRNA + NADP(+) = a uridine in mRNA + NADPH + H(+). In terms of biological role, catalyzes the synthesis of dihydrouridine, a modified base, in various RNAs, such as tRNAs and mRNAs. Modifies the uridine in position 47 (U47) in the D-loop of tRNAs. Also able to mediate formation of dihydrouridine outside of the D-loop of tRNAs. Catalyzes the synthesis of dihydrouridine in some mRNAs, thereby affecting their translation. Dus3-mediated dihydrouridylation of the mRNA encoding alpha-tubulin nda2 is required for meiotic chromosome segregation. This Schizosaccharomyces pombe (strain 972 / ATCC 24843) (Fission yeast) protein is tRNA-dihydrouridine(47) synthase [NAD(P)(+)].